The following is a 415-amino-acid chain: Levansucrase (415 aa).

Sucrose contacts are provided by Trp-45, Asp-46, Ala-132, Arg-202, and Asp-203. The active-site Nucleophile is the Asp-46. Glu-287 (proton donor/acceptor) is an active-site residue.

It belongs to the glycosyl hydrolase 68 family.

It catalyses the reaction [6)-beta-D-fructofuranosyl-(2-&gt;](n) alpha-D-glucopyranoside + sucrose = [6)-beta-D-fructofuranosyl-(2-&gt;](n+1) alpha-D-glucopyranoside + D-glucose. Catalyzes the synthesis of levan, a fructose polymer, by transferring the fructosyl moiety from sucrose to a growing acceptor molecule. The chain is Levansucrase from Rahnella aquatilis (strain ATCC 33071 / DSM 4594 / JCM 1683 / NBRC 105701 / NCIMB 13365 / CIP 78.65).